The primary structure comprises 256 residues: tRNA (guanine-N(7)-)-methyltransferase (256 aa).

S-adenosyl-L-methionine contacts are provided by Glu85, Glu110, Asp137, and Asp159. Residue Asp159 is part of the active site. Substrate-binding residues include Lys163 and Asp195.

It belongs to the class I-like SAM-binding methyltransferase superfamily. TrmB family.

It catalyses the reaction guanosine(46) in tRNA + S-adenosyl-L-methionine = N(7)-methylguanosine(46) in tRNA + S-adenosyl-L-homocysteine. Its pathway is tRNA modification; N(7)-methylguanine-tRNA biosynthesis. Its function is as follows. Catalyzes the formation of N(7)-methylguanine at position 46 (m7G46) in tRNA. In Rhodopseudomonas palustris (strain HaA2), this protein is tRNA (guanine-N(7)-)-methyltransferase.